The following is a 511-amino-acid chain: Serine hydroxymethyltransferase (511 aa).

Lysine 287 is modified (N6-(pyridoxal phosphate)lysine).

This sequence belongs to the SHMT family. Homotetramer. Requires pyridoxal 5'-phosphate as cofactor.

The catalysed reaction is (6R)-5,10-methylene-5,6,7,8-tetrahydrofolate + glycine + H2O = (6S)-5,6,7,8-tetrahydrofolate + L-serine. It functions in the pathway one-carbon metabolism; tetrahydrofolate interconversion. Functionally, interconversion of serine and glycine. This chain is Serine hydroxymethyltransferase, found in Caenorhabditis briggsae.